Consider the following 314-residue polypeptide: Carbamate kinase (314 aa).

It belongs to the carbamate kinase family. Homodimer.

It carries out the reaction hydrogencarbonate + NH4(+) + ATP = carbamoyl phosphate + ADP + H2O + H(+). It functions in the pathway metabolic intermediate metabolism; carbamoyl phosphate degradation; CO(2) and NH(3) from carbamoyl phosphate: step 1/1. The polypeptide is Carbamate kinase (CBK) (Trichomonas vaginalis).